Here is a 250-residue protein sequence, read N- to C-terminus: Deoxynucleoside kinase (250 aa).

27–35 (GNIGSGKTT) contributes to the ATP binding site. Substrate is bound by residues Glu52, Tyr70, and Gln81. Catalysis depends on Glu104, which acts as the Proton acceptor. Substrate-binding residues include Arg105 and Glu172. A phosphoserine mark is found at Ser236, Ser241, and Ser243.

It belongs to the DCK/DGK family. In terms of assembly, monomer.

The catalysed reaction is a 2'-deoxyribonucleoside + ATP = a 2'-deoxyribonucleoside 5'-phosphate + ADP + H(+). Its activity is regulated as follows. Subject to feedback inhibition by dTTP. Deoxyribonucleoside kinase that has a broad specificity phosphorylating thymidine, 2'-deoxyriboadenosine, 2'-deoxyribocytidine and 2'-deoxyriboguanosine. Specificity is higher for pyrimidine nucleosides. Several anti-viral and anti-cancer nucleoside analogs are also efficiently phosphorylated. The chain is Deoxynucleoside kinase (dnk) from Drosophila melanogaster (Fruit fly).